The following is a 133-amino-acid chain: UPF0344 protein SH1980 (133 aa).

4 consecutive transmembrane segments (helical) span residues Met1–Leu21, Val42–Ala62, Met71–Ile91, and Leu103–Trp123.

It belongs to the UPF0344 family.

Its subcellular location is the cell membrane. The polypeptide is UPF0344 protein SH1980 (Staphylococcus haemolyticus (strain JCSC1435)).